The sequence spans 413 residues: MRALDSAPTAHLYVCGITPYDATHLGHAFTYLTYDLAQRVLRDSGHKVLYVQNVTDVDDPLLERADRDGLDWRDLAAREIALFREDMTALRMLAPDSYVGVVEAIPMIVDMVAELVDRGAAYHVDDDLYFSVAAAPAFGEISHLSRAEMLAICAERGGDPGRGGKKDPLDPLLWRARRPGEPSWPSPFGPGRPGWHIECSAIARHHLGGVVDLQGGGTDLSFPHHECSAAHAEVAAGARPFARSYVHTAMVSLDGHKMSKSRGNLEFVSRLRRAGTDLAALRLALLDHRHTADWEWSASLLTDAVARVGRWRAAVALPAGPDAQGVLAAVRERLADDLDAPGALAAVDAWVDAALADAGGGPVGGSVGVGSSGGSLRGSGGAASAGGEAPALVARLVDTLLGVDLEPVRPRGS.

Cysteine 15 serves as a coordination point for Zn(2+). L-cysteinyl-5'-AMP contacts are provided by residues 15 to 18 (CGIT), threonine 30, and 53 to 55 (NVT). The short motif at 17-27 (ITPYDATHLGH) is the 'HIGH' region element. The short motif at 155-160 (ERGGDP) is the 'ERGGDP' region element. Tryptophan 195 contributes to the L-cysteinyl-5'-AMP binding site. Cysteine 199 is a Zn(2+) binding site. L-cysteinyl-5'-AMP is bound at residue 217–219 (GTD). Histidine 224 lines the Zn(2+) pocket. Valine 251 is a binding site for L-cysteinyl-5'-AMP. The short motif at 257 to 261 (KMSKS) is the 'KMSKS' region element.

The protein belongs to the class-I aminoacyl-tRNA synthetase family. MshC subfamily. In terms of assembly, monomer. Requires Zn(2+) as cofactor.

The enzyme catalyses 1D-myo-inositol 2-amino-2-deoxy-alpha-D-glucopyranoside + L-cysteine + ATP = 1D-myo-inositol 2-(L-cysteinylamino)-2-deoxy-alpha-D-glucopyranoside + AMP + diphosphate + H(+). Functionally, catalyzes the ATP-dependent condensation of GlcN-Ins and L-cysteine to form L-Cys-GlcN-Ins. In Frankia alni (strain DSM 45986 / CECT 9034 / ACN14a), this protein is L-cysteine:1D-myo-inositol 2-amino-2-deoxy-alpha-D-glucopyranoside ligase.